Here is a 1228-residue protein sequence, read N- to C-terminus: DNA-directed RNA polymerase subunit beta (1228 aa).

Residues 1175 to 1204 are disordered; sequence ESVDEDEQPQGLGAFEIGGDEIEEDKEDDK. Acidic residues predominate over residues 1192–1202; it reads GGDEIEEDKED.

It belongs to the RNA polymerase beta chain family. In terms of assembly, the RNAP catalytic core consists of 2 alpha, 1 beta, 1 beta' and 1 omega subunit. When a sigma factor is associated with the core the holoenzyme is formed, which can initiate transcription.

The catalysed reaction is RNA(n) + a ribonucleoside 5'-triphosphate = RNA(n+1) + diphosphate. In terms of biological role, DNA-dependent RNA polymerase catalyzes the transcription of DNA into RNA using the four ribonucleoside triphosphates as substrates. The chain is DNA-directed RNA polymerase subunit beta from Caldicellulosiruptor bescii (strain ATCC BAA-1888 / DSM 6725 / KCTC 15123 / Z-1320) (Anaerocellum thermophilum).